We begin with the raw amino-acid sequence, 297 residues long: Ribosomal RNA small subunit methyltransferase H (297 aa).

S-adenosyl-L-methionine-binding positions include 37 to 39, E56, F87, D102, and H109; that span reads GGH.

It belongs to the methyltransferase superfamily. RsmH family.

The protein resides in the cytoplasm. The enzyme catalyses cytidine(1402) in 16S rRNA + S-adenosyl-L-methionine = N(4)-methylcytidine(1402) in 16S rRNA + S-adenosyl-L-homocysteine + H(+). Functionally, specifically methylates the N4 position of cytidine in position 1402 (C1402) of 16S rRNA. In Borrelia hermsii (strain HS1 / DAH), this protein is Ribosomal RNA small subunit methyltransferase H.